A 394-amino-acid chain; its full sequence is MTTRKRQIKNFTLNFGPQHPAAHGVLRLVLEMNGEVVERAEPHIGLLHRGTEKLIEYKTYLQALPYFDRLDYVSMMAQEHAYSLAVEKLLNCEVPLRAQYIRVLFCEITRILNHLLALTTHAMDVGALTPFLWAFEEREKLLEFYERVSGARMHASFIRPGGVAQDLPLGLCRDIDSFTQQFASRIDELEEMLTGNRIWKQRLVDIGTVTAQQAKDWGFSGVMLRGSGVCWDLRRAAPYDVYDQLDFDVPVGTRGDCYDRYCIRIEEMRQSLRIIVQCLNQMPSGMIKADDRKLCPPSRCRMKLSMESLIHHFELYTEGFSVPASSTYTAVEAPKGEFGVFLVSNGSNRPYRCKIRAPGFAHLQGLDFMSKHHMLADVVTIIGTQDIVFGEVDR.

This sequence belongs to the complex I 49 kDa subunit family. Complex I is composed of at least 49 different subunits. This is a component of the iron-sulfur (IP) fragment of the enzyme.

The protein localises to the mitochondrion. The catalysed reaction is a ubiquinone + NADH + 5 H(+)(in) = a ubiquinol + NAD(+) + 4 H(+)(out). Core subunit of the mitochondrial membrane respiratory chain NADH dehydrogenase (Complex I) that is believed to belong to the minimal assembly required for catalysis. Complex I functions in the transfer of electrons from NADH to the respiratory chain. The immediate electron acceptor for the enzyme is believed to be ubiquinone. Component of the iron-sulfur (IP) fragment of the enzyme. This is NADH dehydrogenase [ubiquinone] iron-sulfur protein 2 (NAD7) from Arabidopsis thaliana (Mouse-ear cress).